The primary structure comprises 140 residues: Large ribosomal subunit protein bL17 (140 aa).

This sequence belongs to the bacterial ribosomal protein bL17 family. Part of the 50S ribosomal subunit. Contacts protein L32.

The chain is Large ribosomal subunit protein bL17 from Beijerinckia indica subsp. indica (strain ATCC 9039 / DSM 1715 / NCIMB 8712).